Consider the following 204-residue polypeptide: Ras-related and estrogen-regulated growth inhibitor-like protein (204 aa).

A small GTPase-like region spans residues 1–204 (MNDVKLTVLG…NVFGKRRKSV (204 aa)). Residues 10 to 17 (GGEGTGKS), 57 to 63 (DPCSQPQ), and 122 to 125 (NKQD) contribute to the GTP site.

Belongs to the small GTPase superfamily. Ras family.

It catalyses the reaction GTP + H2O = GDP + phosphate + H(+). Its function is as follows. Binds GDP/GTP and may possess intrinsic GTPase activity. This Bos taurus (Bovine) protein is Ras-related and estrogen-regulated growth inhibitor-like protein (RERGL).